A 147-amino-acid chain; its full sequence is Transthyretin (147 aa).

Positions 1–20 (MASHRLLLLCLAGLVFVSEA) are cleaved as a signal peptide. Sulfocysteine is present on Cys-30. An L-thyroxine-binding site is contributed by Lys-35. Glu-62 is modified (4-carboxyglutamate; in a patient with Moyamoya disease). Ser-72 bears the Phosphoserine mark. Glu-74 is a binding site for L-thyroxine. A glycan (N-linked (GlcNAc...) asparagine) is linked at Asn-118. Residue Ser-137 participates in L-thyroxine binding.

It belongs to the transthyretin family. In terms of assembly, homotetramer. Dimer of dimers. In the homotetramer, subunits assemble around a central channel that can accommodate two ligand molecules. Interacts with RBP4. Not glycosylated under normal conditions. Following unfolding, caused for example by variant AMYLD1 'Gly-38', the cryptic Asn-118 site is exposed and glycosylated by STT3B-containing OST complex, leading to its degradation by the ER-associated degradation (ERAD) pathway. In terms of processing, sulfonation of the reactive cysteine Cys-30 enhances the stability of the native conformation of TTR, avoiding misassembly of the protein leading to amyloid formation. In terms of tissue distribution, detected in serum and cerebrospinal fluid (at protein level). Highly expressed in choroid plexus epithelial cells. Detected in retina pigment epithelium and liver.

The protein resides in the secreted. Its subcellular location is the cytoplasm. In terms of biological role, thyroid hormone-binding protein. Probably transports thyroxine from the bloodstream to the brain. The sequence is that of Transthyretin (TTR) from Homo sapiens (Human).